Consider the following 491-residue polypeptide: Aspartyl/glutamyl-tRNA(Asn/Gln) amidotransferase subunit B (491 aa).

This sequence belongs to the GatB/GatE family. GatB subfamily. As to quaternary structure, heterotrimer of A, B and C subunits.

The enzyme catalyses L-glutamyl-tRNA(Gln) + L-glutamine + ATP + H2O = L-glutaminyl-tRNA(Gln) + L-glutamate + ADP + phosphate + H(+). It carries out the reaction L-aspartyl-tRNA(Asn) + L-glutamine + ATP + H2O = L-asparaginyl-tRNA(Asn) + L-glutamate + ADP + phosphate + 2 H(+). In terms of biological role, allows the formation of correctly charged Asn-tRNA(Asn) or Gln-tRNA(Gln) through the transamidation of misacylated Asp-tRNA(Asn) or Glu-tRNA(Gln) in organisms which lack either or both of asparaginyl-tRNA or glutaminyl-tRNA synthetases. The reaction takes place in the presence of glutamine and ATP through an activated phospho-Asp-tRNA(Asn) or phospho-Glu-tRNA(Gln). The chain is Aspartyl/glutamyl-tRNA(Asn/Gln) amidotransferase subunit B from Paraburkholderia phymatum (strain DSM 17167 / CIP 108236 / LMG 21445 / STM815) (Burkholderia phymatum).